Here is an 89-residue protein sequence, read N- to C-terminus: Small ribosomal subunit protein uS14A (89 aa).

Belongs to the universal ribosomal protein uS14 family. In terms of assembly, part of the 30S ribosomal subunit. Contacts proteins S3 and S10.

Binds 16S rRNA, required for the assembly of 30S particles and may also be responsible for determining the conformation of the 16S rRNA at the A site. The sequence is that of Small ribosomal subunit protein uS14A from Bacillus pumilus (strain SAFR-032).